We begin with the raw amino-acid sequence, 719 residues long: Potassium channel KOR2 (719 aa).

At 1-63 (MAEEYELNEI…VIHPNGRWYR (63 aa)) the chain is on the cytoplasmic side. Residues 64–84 (IWANMMFLWSIYSTFFTPFEF) form a helical membrane-spanning segment. The Extracellular portion of the chain corresponds to 85–93 (SFFRGLPDQ). Residues 94 to 114 (LLDLECVQLVFLADVAVHFFL) form a helical membrane-spanning segment. The Cytoplasmic portion of the chain corresponds to 115-137 (AYRDPHTYRMVHDKRHIALRYIK). Residues 138–158 (GSFALDVLGCFPWDAIYKVTG) form a helical membrane-spanning segment. Residues 159-164 (RVEAVR) lie on the Extracellular side of the membrane. The helical; Voltage-sensor transmembrane segment at 165-185 (WLVWVRLYRGRKVMAFFKRVE) threads the bilayer. The Cytoplasmic portion of the chain corresponds to 186 to 199 (KDIRVSYLLTRIVK). Residues 200–220 (LITVELYCTHTAACGFYYLAT) form a helical membrane-spanning segment. Residues 221–255 (TLPPAREGGTWIGSLSLGDARYINFREVDLLTRYV) lie on the Extracellular side of the membrane. An intramembrane region (pore-forming) is located at residues 256–275 (TSLYLAIVTMATVGYGDIHA). Residues 276–285 (VNTREMAFTV) lie on the Extracellular side of the membrane. Residues 286-306 (VYISFSIVLSAYLIGNMTALI) traverse the membrane as a helical segment. The Cytoplasmic portion of the chain corresponds to 307–719 (VKGSRTERFR…LEQARTVATN (413 aa)). 383–503 (LFRGCSDDFL…SQILSNLLKG (121 aa)) contributes to the a nucleoside 3',5'-cyclic phosphate binding site. ANK repeat units lie at residues 523 to 556 (KQES…DPSK), 560 to 589 (DGRT…NVNS), 593 to 622 (FGNS…ILNL), 624 to 653 (DAGG…SPNC), and 657 to 686 (DQRT…DIQA).

It belongs to the potassium channel family. Plant (TC 1.A.1.4) subfamily.

The protein resides in the membrane. Functionally, probable outward-rectifying potassium channel. The sequence is that of Potassium channel KOR2 from Oryza sativa subsp. japonica (Rice).